The sequence spans 91 residues: Cell division topological specificity factor (91 aa).

It belongs to the MinE family.

In terms of biological role, prevents the cell division inhibition by proteins MinC and MinD at internal division sites while permitting inhibition at polar sites. This ensures cell division at the proper site by restricting the formation of a division septum at the midpoint of the long axis of the cell. This chain is Cell division topological specificity factor, found in Lachnospira eligens (strain ATCC 27750 / DSM 3376 / VPI C15-48 / C15-B4) (Eubacterium eligens).